Here is a 350-residue protein sequence, read N- to C-terminus: Bifunctional methylenetetrahydrofolate dehydrogenase/cyclohydrolase, mitochondrial (350 aa).

Residues 1–35 constitute a mitochondrion transit peptide; it reads MAAASFITSLVTRLLRSAQSGRLHQRPFHLSAVRN. K50 carries the N6-acetyllysine; alternate modification. Residue K50 forms a Glycyl lysine isopeptide (Lys-Gly) (interchain with G-Cter in SUMO2); alternate linkage. Residues 84-88 and 131-133 contribute to the substrate site; these read YVLNK and VQL. NAD(+) contacts are provided by residues 200-202 and R233; that span reads GRS. 309-313 contacts substrate; the sequence is PGGVG.

The protein belongs to the tetrahydrofolate dehydrogenase/cyclohydrolase family. Homodimer. Mg(2+) serves as cofactor.

The protein localises to the mitochondrion. It catalyses the reaction (6R)-5,10-methylene-5,6,7,8-tetrahydrofolate + NAD(+) = (6R)-5,10-methenyltetrahydrofolate + NADH. The enzyme catalyses (6R)-5,10-methenyltetrahydrofolate + H2O = (6R)-10-formyltetrahydrofolate + H(+). In terms of biological role, although its dehydrogenase activity is NAD-specific, it can also utilize NADP at a reduced efficiency. The protein is Bifunctional methylenetetrahydrofolate dehydrogenase/cyclohydrolase, mitochondrial (MTHFD2) of Bos taurus (Bovine).